The primary structure comprises 190 residues: Large ribosomal subunit protein eL19 (190 aa).

Disordered stretches follow at residues 56-85 (TVHS…KGTK) and 166-190 (NRAA…EAAN). Residues 72-83 (AGRHMGYGKRKG) are compositionally biased toward basic residues. Positions 166–184 (NRAARERRQQRLAEKKEAL) are enriched in basic and acidic residues.

It belongs to the eukaryotic ribosomal protein eL19 family. Component of the large ribosomal subunit. Mature ribosomes consist of a small (40S) and a large (60S) subunit. The 40S subunit contains about 32 different proteins and 1 molecule of RNA (18S). The 60S subunit contains 45 different proteins and 3 molecules of RNA (25S, 5.8S and 5S).

The protein resides in the cytoplasm. Functionally, component of the ribosome, a large ribonucleoprotein complex responsible for the synthesis of proteins in the cell. The small ribosomal subunit (SSU) binds messenger RNAs (mRNAs) and translates the encoded message by selecting cognate aminoacyl-transfer RNA (tRNA) molecules. The large subunit (LSU) contains the ribosomal catalytic site termed the peptidyl transferase center (PTC), which catalyzes the formation of peptide bonds, thereby polymerizing the amino acids delivered by tRNAs into a polypeptide chain. The nascent polypeptides leave the ribosome through a tunnel in the LSU and interact with protein factors that function in enzymatic processing, targeting, and the membrane insertion of nascent chains at the exit of the ribosomal tunnel. RPL19A may play a role in the last stages of translation initiation, in particular subunit joining and shedding/releasing factors. This is Large ribosomal subunit protein eL19 from Candida albicans (strain SC5314 / ATCC MYA-2876) (Yeast).